Reading from the N-terminus, the 128-residue chain is Ribonuclease P protein component (128 aa).

This sequence belongs to the RnpA family. Consists of a catalytic RNA component (M1 or rnpB) and a protein subunit.

The catalysed reaction is Endonucleolytic cleavage of RNA, removing 5'-extranucleotides from tRNA precursor.. Functionally, RNaseP catalyzes the removal of the 5'-leader sequence from pre-tRNA to produce the mature 5'-terminus. It can also cleave other RNA substrates such as 4.5S RNA. The protein component plays an auxiliary but essential role in vivo by binding to the 5'-leader sequence and broadening the substrate specificity of the ribozyme. In Parasynechococcus marenigrum (strain WH8102), this protein is Ribonuclease P protein component.